Consider the following 482-residue polypeptide: MFIRNNRRSKIVATVGPASSSPDMLRSLFLAGVDTFRLNFSHGARADHAEVYRNIRALEQEHDAAIAVLQDLQGPKIRIGVLAHGRLDLARGSTIGFILGREGGEGMNDIPLPHREIFEVAVPGMDLLIDDGRIKVRIMEVMDGRLVCEVLNGGALSNRKGVNVPGAVLDISPLTAKDREDLEFGLELGVDWVALSFVQRARDMIEARSLVGDRAGLIAKIEKPSALDDIEDIVRLSDSVMVARGDLGVEIPPEDVPGKQKEIIRACRLAAKPVIVATQMLDSMVSSPTPTRAEASDVAGAIYDGADAVMLSAETATGAYPVEAVEIMNRIIEKTEKHKHYRPILEATEPDVAQSPPHAVATAAANVAVALGSPVVVAYTSSGTTAARISRARPALPILALTPSEQVARRLNMFWGVVGVRSQDVHTYEASLIHAQQAVQEAKLASPSDHIVIVAGFPFAQQGSTNNLRVVQIAATDNLEIA.

Substrate is bound at residue R37. N39, S41, and D71 together coordinate K(+). Residue 39 to 42 coordinates ATP; it reads NFSH. Positions 78 and 160 each coordinate ATP. Mg(2+) is bound at residue E222. G245, D246, and T278 together coordinate substrate. D246 serves as a coordination point for Mg(2+).

Belongs to the pyruvate kinase family. As to quaternary structure, homotetramer. The cofactor is Mg(2+). K(+) is required as a cofactor.

The catalysed reaction is pyruvate + ATP = phosphoenolpyruvate + ADP + H(+). The protein operates within carbohydrate degradation; glycolysis; pyruvate from D-glyceraldehyde 3-phosphate: step 5/5. This chain is Pyruvate kinase (ttuE), found in Agrobacterium vitis (Rhizobium vitis).